A 229-amino-acid polypeptide reads, in one-letter code: Large ribosomal subunit protein uL1 (229 aa).

Belongs to the universal ribosomal protein uL1 family. As to quaternary structure, part of the 50S ribosomal subunit.

Functionally, binds directly to 23S rRNA. The L1 stalk is quite mobile in the ribosome, and is involved in E site tRNA release. Its function is as follows. Protein L1 is also a translational repressor protein, it controls the translation of the L11 operon by binding to its mRNA. In Streptococcus gordonii (strain Challis / ATCC 35105 / BCRC 15272 / CH1 / DL1 / V288), this protein is Large ribosomal subunit protein uL1.